We begin with the raw amino-acid sequence, 103 residues long: Large ribosomal subunit protein bL21 (103 aa).

It belongs to the bacterial ribosomal protein bL21 family. In terms of assembly, part of the 50S ribosomal subunit. Contacts protein L20.

Functionally, this protein binds to 23S rRNA in the presence of protein L20. The polypeptide is Large ribosomal subunit protein bL21 (Mycobacterium marinum (strain ATCC BAA-535 / M)).